Consider the following 63-residue polypeptide: Beta-glucosidase A-3 (63 aa).

Asp12 is an active-site residue. 2 N-linked (GlcNAc...) asparagine glycosylation sites follow: Asn48 and Asn56.

This sequence belongs to the glycosyl hydrolase 3 family.

The enzyme catalyses Hydrolysis of terminal, non-reducing beta-D-glucosyl residues with release of beta-D-glucose.. It functions in the pathway glycan metabolism; cellulose degradation. The sequence is that of Beta-glucosidase A-3 from Aspergillus wentii.